The sequence spans 289 residues: BTB/POZ domain-containing protein KCTD7 (289 aa).

The segment at 1-35 (MVVVTGREPDSRRQDGAMSSSDAEDDFLEPATPTA) is disordered. Positions 51 to 149 (EVVPLNIGGA…QLENMQPLKG (99 aa)) constitute a BTB domain.

Interacts with CUL3.

The protein resides in the cell membrane. It is found in the cytoplasm. It localises to the cytosol. Its function is as follows. May be involved in the control of excitability of cortical neurons. The chain is BTB/POZ domain-containing protein KCTD7 (KCTD7) from Homo sapiens (Human).